The sequence spans 227 residues: Ribose-5-phosphate isomerase A (227 aa).

Residues 26–29, 82–85, and 95–98 each bind substrate; these read TGST, DGAD, and KGGG. The active-site Proton acceptor is the glutamate 104. Lysine 122 lines the substrate pocket.

It belongs to the ribose 5-phosphate isomerase family. As to quaternary structure, homodimer.

The catalysed reaction is aldehydo-D-ribose 5-phosphate = D-ribulose 5-phosphate. Its pathway is carbohydrate degradation; pentose phosphate pathway; D-ribose 5-phosphate from D-ribulose 5-phosphate (non-oxidative stage): step 1/1. In terms of biological role, catalyzes the reversible conversion of ribose-5-phosphate to ribulose 5-phosphate. The polypeptide is Ribose-5-phosphate isomerase A (Streptococcus pneumoniae (strain Hungary19A-6)).